The primary structure comprises 284 residues: Protein Ku (284 aa).

Residues Thr10 to Pro189 enclose the Ku domain.

As to quaternary structure, homodimer. Interacts with host LigD.

Functionally, required for replication of viruses with short cos ends (4 bases). Stimulates dsDNA end-joining by host LigD. Binds dsDNA with either blunt, 5'- or 3-overhangs, protecting it from host exonuclease degradation. This chain is Protein Ku (87), found in Mycobacterium phage Corndog (Mycobacteriophage Corndog).